Consider the following 207-residue polypeptide: Large ribosomal subunit protein uL4 (207 aa).

The tract at residues 45 to 78 (RQGTHAVKNRSARRGGGRKPWRQKGTGRARQGSI) is disordered. A compositionally biased stretch (basic residues) spans 51–71 (VKNRSARRGGGRKPWRQKGTG).

Belongs to the universal ribosomal protein uL4 family. Part of the 50S ribosomal subunit.

In terms of biological role, one of the primary rRNA binding proteins, this protein initially binds near the 5'-end of the 23S rRNA. It is important during the early stages of 50S assembly. It makes multiple contacts with different domains of the 23S rRNA in the assembled 50S subunit and ribosome. Its function is as follows. Forms part of the polypeptide exit tunnel. In Lactiplantibacillus plantarum (strain ATCC BAA-793 / NCIMB 8826 / WCFS1) (Lactobacillus plantarum), this protein is Large ribosomal subunit protein uL4.